Consider the following 298-residue polypeptide: tRNA-uridine aminocarboxypropyltransferase 2 (298 aa).

Methionine 1 carries the post-translational modification N-acetylmethionine. The tract at residues 1–52 is disordered; the sequence is MESQKEARILQEPVARPPGASRSQTPNAKERQEGGPVPAAAALGAEADDDSA. At serine 132 the chain carries Phosphoserine. A DXTW motif is present at residues 178–181; sequence DGTW.

The protein belongs to the TDD superfamily. DTWD2 family.

The protein localises to the nucleus. It localises to the cytoplasm. The enzyme catalyses a uridine in tRNA + S-adenosyl-L-methionine = a 3-[(3S)-3-amino-3-carboxypropyl]uridine in tRNA + S-methyl-5'-thioadenosine + H(+). Its function is as follows. Catalyzes the formation of 3-(3-amino-3-carboxypropyl)uridine (acp3U) at position 20a in the D-loop of several cytoplasmic tRNAs (acp3U(20a)). Also has a weak activity to form acp3U at position 20 in the D-loop of tRNAs (acp3U(20)). Involved in glycoRNA biosynthesis by mediating formation of acp3U, which acts as an attachment site for N-glycans on tRNAs. GlycoRNAs consist of RNAs modified with secretory N-glycans that are presented on the cell surface. This chain is tRNA-uridine aminocarboxypropyltransferase 2, found in Macaca fascicularis (Crab-eating macaque).